Consider the following 178-residue polypeptide: Large ribosomal subunit protein uL6 (178 aa).

The protein belongs to the universal ribosomal protein uL6 family. In terms of assembly, part of the 50S ribosomal subunit.

This protein binds to the 23S rRNA, and is important in its secondary structure. It is located near the subunit interface in the base of the L7/L12 stalk, and near the tRNA binding site of the peptidyltransferase center. This chain is Large ribosomal subunit protein uL6, found in Helicobacter pylori (strain J99 / ATCC 700824) (Campylobacter pylori J99).